The sequence spans 881 residues: Phosphoinositide 3-kinase regulatory subunit 5 (881 aa).

Residues 23 to 99 (SRDAVSSRWA…APHIPPDSEL (77 aa)) form a heterodimerization region. 2 disordered regions span residues 312–339 (PVAS…ERDS) and 472–499 (PQAK…KLQT). A compositionally biased stretch (acidic residues) spans 316–330 (ENEEDEEEEEEDVET). Positions 657–757 (PILADMILYY…WNDVEKVCTS (101 aa)) are interaction with G beta gamma proteins.

In terms of assembly, heterodimer. Interacts with a catalytic subunit and with G beta gamma proteins.

It localises to the nucleus. It is found in the cytoplasm. The protein resides in the cell membrane. With respect to regulation, greatly activated by G gamma proteins. Its function is as follows. Regulatory subunit of the PI3K gamma complex. This Gallus gallus (Chicken) protein is Phosphoinositide 3-kinase regulatory subunit 5 (PIK3R5).